The sequence spans 388 residues: 1-deoxy-D-xylulose 5-phosphate reductoisomerase (388 aa).

NADPH-binding residues include Thr-10, Gly-11, Thr-12, Ile-13, Arg-37, Gln-38, and Asn-122. Position 123 (Lys-123) interacts with 1-deoxy-D-xylulose 5-phosphate. Glu-124 is a binding site for NADPH. Position 148 (Asp-148) interacts with Mn(2+). Residues Ser-149, Glu-150, Ser-179, and His-202 each contribute to the 1-deoxy-D-xylulose 5-phosphate site. Glu-150 contributes to the Mn(2+) binding site. NADPH is bound at residue Gly-208. 1-deoxy-D-xylulose 5-phosphate-binding residues include Ser-215, Asn-220, Lys-221, and Glu-224. Residue Glu-224 participates in Mn(2+) binding.

Belongs to the DXR family. Requires Mg(2+) as cofactor. Mn(2+) serves as cofactor.

The catalysed reaction is 2-C-methyl-D-erythritol 4-phosphate + NADP(+) = 1-deoxy-D-xylulose 5-phosphate + NADPH + H(+). Its pathway is isoprenoid biosynthesis; isopentenyl diphosphate biosynthesis via DXP pathway; isopentenyl diphosphate from 1-deoxy-D-xylulose 5-phosphate: step 1/6. Catalyzes the NADPH-dependent rearrangement and reduction of 1-deoxy-D-xylulose-5-phosphate (DXP) to 2-C-methyl-D-erythritol 4-phosphate (MEP). The protein is 1-deoxy-D-xylulose 5-phosphate reductoisomerase of Laribacter hongkongensis (strain HLHK9).